An 843-amino-acid polypeptide reads, in one-letter code: Structure-specific endonuclease subunit SLX4 (843 aa).

Disordered stretches follow at residues 26–111 (SPPS…KTTT), 281–313 (AIPT…QKGK), 339–377 (NVAP…NGPP), 603–655 (SKTF…AKAL), and 729–748 (ATPN…FSIE). Composition is skewed to polar residues over residues 50–69 (ASFS…NGEN) and 285–301 (PTES…SSKQ). Positions 302-311 (QRVKAKKPQK) are enriched in basic residues. Polar residues-rich tracts occupy residues 349-372 (NISN…TLKN) and 603-616 (SKTF…NQGT). The segment covering 617–636 (DDARKNGFRKENHSDVRVRP) has biased composition (basic and acidic residues). Over residues 739–748 (RSSSTSFSIE) the composition is skewed to low complexity.

The protein belongs to the SLX4 family. As to quaternary structure, forms a heterodimer with SLX1. Post-translationally, phosphorylated in response to DNA damage.

The protein resides in the nucleus. Functionally, regulatory subunit of the SLX1-SLX4 structure-specific endonuclease that resolves DNA secondary structures generated during DNA repair and recombination. Has endonuclease activity towards branched DNA substrates, introducing single-strand cuts in duplex DNA close to junctions with ss-DNA. This Ajellomyces capsulatus (strain G186AR / H82 / ATCC MYA-2454 / RMSCC 2432) (Darling's disease fungus) protein is Structure-specific endonuclease subunit SLX4.